Consider the following 133-residue polypeptide: Hydrogenase maturation factor HypA (133 aa).

A Ni(2+)-binding site is contributed by His-2. Cys-73, Cys-75, Cys-105, and Cys-108 together coordinate Zn(2+).

This sequence belongs to the HypA/HybF family.

In terms of biological role, involved in the maturation of [NiFe] hydrogenases. Required for nickel insertion into the metal center of the hydrogenase. The polypeptide is Hydrogenase maturation factor HypA (Methanosarcina barkeri (strain Fusaro / DSM 804)).